The following is a 79-amino-acid chain: Large ribosomal subunit protein eL38 (79 aa).

It belongs to the eukaryotic ribosomal protein eL38 family.

In Theileria parva (East coast fever infection agent), this protein is Large ribosomal subunit protein eL38 (RPL38).